Here is a 208-residue protein sequence, read N- to C-terminus: FMN-dependent NADH:quinone oxidoreductase 2 (208 aa).

The protein belongs to the azoreductase type 1 family. Homodimer. FMN is required as a cofactor.

It catalyses the reaction 2 a quinone + NADH + H(+) = 2 a 1,4-benzosemiquinone + NAD(+). The catalysed reaction is N,N-dimethyl-1,4-phenylenediamine + anthranilate + 2 NAD(+) = 2-(4-dimethylaminophenyl)diazenylbenzoate + 2 NADH + 2 H(+). Functionally, quinone reductase that provides resistance to thiol-specific stress caused by electrophilic quinones. In terms of biological role, also exhibits azoreductase activity. Catalyzes the reductive cleavage of the azo bond in aromatic azo compounds to the corresponding amines. This is FMN-dependent NADH:quinone oxidoreductase 2 from Bacillus anthracis.